Reading from the N-terminus, the 101-residue chain is Large ribosomal subunit protein uL24 (101 aa).

It belongs to the universal ribosomal protein uL24 family. In terms of assembly, part of the 50S ribosomal subunit.

In terms of biological role, one of two assembly initiator proteins, it binds directly to the 5'-end of the 23S rRNA, where it nucleates assembly of the 50S subunit. Its function is as follows. One of the proteins that surrounds the polypeptide exit tunnel on the outside of the subunit. This Borreliella afzelii (strain PKo) (Borrelia afzelii) protein is Large ribosomal subunit protein uL24.